A 168-amino-acid chain; its full sequence is Ribosome maturation factor RimM (168 aa).

The region spanning 94 to 167 is the PRC barrel domain; the sequence is DGNYYHHQII…KVIIELLDGL (74 aa).

The protein belongs to the RimM family. Binds ribosomal protein uS19.

It localises to the cytoplasm. An accessory protein needed during the final step in the assembly of 30S ribosomal subunit, possibly for assembly of the head region. Essential for efficient processing of 16S rRNA. May be needed both before and after RbfA during the maturation of 16S rRNA. It has affinity for free ribosomal 30S subunits but not for 70S ribosomes. This Ligilactobacillus salivarius (strain UCC118) (Lactobacillus salivarius) protein is Ribosome maturation factor RimM.